Here is a 499-residue protein sequence, read N- to C-terminus: Putative protein phosphatase 2C 76 (499 aa).

The signal sequence occupies residues 1–34; the sequence is MRLGCSGRRRRLLRAALLRLVVLVLVAPPRRCAG. Positions 67–101 are disordered; that stretch reads AGSGGEGDGDRRSSSSSPPPPPHPRGCHVAVDRGR. Residues 92 to 457 form the PPM-type phosphatase domain; that stretch reads GCHVAVDRGR…DNVAAVIVPL (366 aa). Asp-138 and Gly-139 together coordinate Mn(2+). The interval 286–306 is disordered; it reads KKTSVVSGKRRRKRNSNNRDD. Positions 397 and 448 each coordinate Mn(2+).

The protein belongs to the PP2C family. Requires Mg(2+) as cofactor. Mn(2+) is required as a cofactor.

The catalysed reaction is O-phospho-L-seryl-[protein] + H2O = L-seryl-[protein] + phosphate. The enzyme catalyses O-phospho-L-threonyl-[protein] + H2O = L-threonyl-[protein] + phosphate. This Oryza sativa subsp. japonica (Rice) protein is Putative protein phosphatase 2C 76.